The sequence spans 142 residues: MGLMKKFRDYFLEEDYEDYEEEYEAPQPEEEALPKTAGKANVVSLQSVQKSAKVVLAEPRVYAEAQEIADHLKSRRAVIVNLQRIQHEQAKRIVDFLSGTVYAIGGDIQQVGTKIFLCTPENVDVSGSISLDGEDDRPMKRW.

Belongs to the SepF family. Homodimer. Interacts with FtsZ.

The protein resides in the cytoplasm. Its function is as follows. Cell division protein that is part of the divisome complex and is recruited early to the Z-ring. Probably stimulates Z-ring formation, perhaps through the cross-linking of FtsZ protofilaments. Its function overlaps with FtsA. The sequence is that of Cell division protein SepF from Geobacillus kaustophilus (strain HTA426).